Reading from the N-terminus, the 300-residue chain is Cell shape-determining protein MreC (300 aa).

At 1-17 (MARDRTRPEDFTRPLRR) the chain is on the cytoplasmic side. A helical transmembrane segment spans residues 18-38 (ILVGGLVLLLLGIFLIWRIDS). At 39–300 (PRVEQFRAAL…APAAVEGADG (262 aa)) the chain is on the periplasmic side. The stretch at 74-117 (QSYTRIYEQNQELRRELQQMKAWKEAALQLEQKNARLLDLNQVR) forms a coiled coil. The segment at 277-300 (SDPGKLVAEPPAPPAPAAVEGADG) is disordered.

It belongs to the MreC family.

It is found in the cell inner membrane. Functionally, involved in formation and maintenance of cell shape. This chain is Cell shape-determining protein MreC, found in Cereibacter sphaeroides (Rhodobacter sphaeroides).